Here is a 457-residue protein sequence, read N- to C-terminus: MAPAQNPISSQHVVVIGAGAAGLVAARELSREGHTVVVLEREKEVGGLWIYSPKAESDPLSLDPTRSIVHSSVYESLRTNLPRECMGFTDFPFVPRFDDESRDSRRYPSHMEVLAYLQDFAREFNLEEMVRFEIEVVRVEPVNGKWRVWSKTSGGVSHDEIFDAVVVCSGHYTEPNVAHIPGIKSWPGKQIHSHNYRVPGPFENEVVVVIGNFASGADISRDIAKVAKEVHIASRASEFDTYEKLPVPRNNLWIHSEIDTAYEDGSIVFKNGKVVYADSIVYCTGYKYRFTFLETNGYMNIDENRVEHLYKHVFPPALSPGLSFVGLPSMGIQFVMFEIQSKWVAAVLSRRVTLPTEDKMMEDISAWYASLDAVGIPKRYTHKLGKIQSEYLNWVAEECGCPLVEHWRNQQIVRGYQRLVSHPETYRDEWDDNDLMEEAYEDFARKKLISFHPSHIL.

An FAD-binding site is contributed by G17 to G22. Position 211 to 216 (G211 to G216) interacts with NADP(+).

Belongs to the FMO family.

It catalyses the reaction a (Z)-omega-(methylsulfanyl)-N-sulfo-alkylhydroximate S-glucoside + NADPH + O2 + H(+) = a (Z)-omega-(methylsulfinyl)-alkyl-glucosinolate + NADP(+) + H2O. Its function is as follows. Catalyzes the conversion of methylthioalkyl glucosinolates of any chain length into methylsulfinylalkyl glucosinolates. In Arabidopsis thaliana (Mouse-ear cress), this protein is Flavin-containing monooxygenase FMO GS-OX2 (FMOGS-OX2).